Reading from the N-terminus, the 395-residue chain is Pyruvate synthase subunit PorA (395 aa).

As to quaternary structure, heterotetramer of one alpha, one beta, one delta and one gamma chain.

The catalysed reaction is 2 oxidized [2Fe-2S]-[ferredoxin] + pyruvate + CoA = 2 reduced [2Fe-2S]-[ferredoxin] + acetyl-CoA + CO2 + H(+). This chain is Pyruvate synthase subunit PorA (porA), found in Pyrococcus horikoshii (strain ATCC 700860 / DSM 12428 / JCM 9974 / NBRC 100139 / OT-3).